A 365-amino-acid chain; its full sequence is D-alanine--D-alanine ligase (365 aa).

Residues 135 to 345 (KLLLKSFNIP…YGSLVDKLIA (211 aa)) enclose the ATP-grasp domain. 168 to 223 (KQSLDYPVIVKPAMLGSSIGISIAYNETQIEKCIEEAFAYDLTVVIEKFMRAREIE) contributes to the ATP binding site. Mg(2+)-binding residues include Asp-298, Glu-312, and Asn-314.

The protein belongs to the D-alanine--D-alanine ligase family. Requires Mg(2+) as cofactor. The cofactor is Mn(2+).

Its subcellular location is the cytoplasm. The catalysed reaction is 2 D-alanine + ATP = D-alanyl-D-alanine + ADP + phosphate + H(+). The protein operates within cell wall biogenesis; peptidoglycan biosynthesis. Its function is as follows. Cell wall formation. This is D-alanine--D-alanine ligase from Borrelia turicatae (strain 91E135).